Consider the following 375-residue polypeptide: Mitogen-activated protein kinase 1 (375 aa).

A Protein kinase domain is found at 43–329 (RPPIMPIGRG…VEEALAHPYL (287 aa)). ATP-binding positions include 49–57 (IGRGAYGIV) and Lys72. The active-site Proton acceptor is the Asp169. Thr201 carries the post-translational modification Phosphothreonine. Residues 201 to 203 (TEY) carry the TXY motif. Tyr203 carries the post-translational modification Phosphotyrosine. Residue Thr206 is modified to Phosphothreonine.

It belongs to the protein kinase superfamily. CMGC Ser/Thr protein kinase family. MAP kinase subfamily. Mg(2+) serves as cofactor. Post-translationally, activated by wounding and UV-C in a cultivar-dependent manner; phosphorylated in cv. Pungchon but not in cv. Subicho.

The enzyme catalyses L-seryl-[protein] + ATP = O-phospho-L-seryl-[protein] + ADP + H(+). The catalysed reaction is L-threonyl-[protein] + ATP = O-phospho-L-threonyl-[protein] + ADP + H(+). Activated by threonine and tyrosine phosphorylation. In terms of biological role, stress-inducible protein kinase involved in oxidative stress-mediated and innate immune MAP kinase signaling cascades. This chain is Mitogen-activated protein kinase 1, found in Capsicum annuum (Capsicum pepper).